The primary structure comprises 353 residues: uncharacterized protein (353 aa).

Residues 18–83 (NIEFPCLLSE…TLWRDVFLRF (66 aa)) form the HTH luxR-type domain. Residues 42–61 (VNEISKRRNRSIKTVSCQKM) constitute a DNA-binding region (H-T-H motif). Residues 98–350 (NSSVLPVVSS…AFVRKLLASL (253 aa)) enclose the EAL domain.

This is an uncharacterized protein from Escherichia coli (strain K12).